The chain runs to 980 residues: Chitin binding domain containing chtb-2 (980 aa).

Residues 1 to 20 form the signal peptide; that stretch reads MRTMHCFLFILLFCLGQVFT. N-linked (GlcNAc...) asparagine glycans are attached at residues N187 and N190. 3 disordered regions span residues 310–354, 431–451, and 486–512; these read ERQQ…AELD, QEEERQRKIQQQKVEMEQIRQ, and EILRQQEEDQKKKKLEKDREQREQQEA. Residues N941 and N975 are each glycosylated (N-linked (GlcNAc...) asparagine).

The chain is Chitin binding domain containing chtb-2 from Caenorhabditis elegans.